The following is a 606-amino-acid chain: MSQSIQINRSAADAWSQLVKGGALDIDGRDKEFAGAICKMLDPTGTDLGDALAKATTDQLIQVFFRALQPFSEMYREILRFFTTAGAKYGRDQWRIGISEKHFELSDFEDFVRMWDGVPGEIDVPALGHEDFGIVWLAWEAYPQLGNVANKAAREPAELGIADVDRWLVDYRSGQINPLPLSVLSEQQDAGFRELAALVATVHEGLVAFSQNRAVLRSQFDWRTLKGSDAFSVNQLAFLDTDNWLGTAVAGLALAKGIAPESRSRIARVLQNAFEGLPTRKLKARVSLNDLDRFLSLPVWQKRHEIYAVWVFTELAAAANEHDLEIYHDQGRIAFEFRESRLATVTSARPPIDMITERRSPIANPVGAGRTANVQPDFGLWARDPGAERCALVVEVKHYKRTAKKSFSEVMTDYAAAHPNAPIVLVNYGPIGDILDCIPLSAKARCATVEHLTALNRTAREEFRDLVRKVIGWPVRAAPEIGGTTRAKSAVAVDVSRSMAPVLSDPRFSSALAAIAVAPHASEIFPIDRRVHTAISVEQAIERLRSIQGDINALEAPVTELLGTYDEVIVLTDRDGLNDLSALRSASEEFAAGSFFRVTVSRPEST.

This is an uncharacterized protein from Sinorhizobium fredii (strain NBRC 101917 / NGR234).